Consider the following 143-residue polypeptide: Flagellar assembly factor FliW (143 aa).

The protein belongs to the FliW family. Interacts with translational regulator CsrA and flagellin(s).

The protein resides in the cytoplasm. Acts as an anti-CsrA protein, binds CsrA and prevents it from repressing translation of its target genes, one of which is flagellin. Binds to flagellin and participates in the assembly of the flagellum. The chain is Flagellar assembly factor FliW from Clostridium novyi (strain NT).